A 160-amino-acid chain; its full sequence is Cyclic pyranopterin monophosphate synthase (160 aa).

Substrate is bound by residues 75–77 and 115–116; these read MCH and ME. Residue Asp130 is part of the active site.

Belongs to the MoaC family. In terms of assembly, homohexamer; trimer of dimers.

The catalysed reaction is (8S)-3',8-cyclo-7,8-dihydroguanosine 5'-triphosphate = cyclic pyranopterin phosphate + diphosphate. It participates in cofactor biosynthesis; molybdopterin biosynthesis. Functionally, catalyzes the conversion of (8S)-3',8-cyclo-7,8-dihydroguanosine 5'-triphosphate to cyclic pyranopterin monophosphate (cPMP). The chain is Cyclic pyranopterin monophosphate synthase from Lysinibacillus sphaericus (strain C3-41).